Consider the following 492-residue polypeptide: Beta-Ala-His dipeptidase (492 aa).

His107 contacts Zn(2+). Residue Asp109 is part of the active site. Residue Asp140 participates in Zn(2+) binding. Glu174 acts as the Proton acceptor in catalysis. Residue Glu175 participates in Zn(2+) binding. Ser194 is modified (phosphoserine). 2 residues coordinate Zn(2+): Asp203 and His453.

The protein belongs to the peptidase M20A family. Homodimer. The cofactor is Zn(2+). As to expression, detected exclusively in kidney.

It localises to the secreted. The enzyme catalyses Preferential hydrolysis of the beta-Ala-|-His dipeptide (carnosine), and also anserine, Xaa-|-His dipeptides and other dipeptides including homocarnosine.. It carries out the reaction carnosine + H2O = beta-alanine + L-histidine. It catalyses the reaction anserine + H2O = N(pros)-methyl-L-histidine + beta-alanine. The catalysed reaction is L-alanyl-L-histidine + H2O = L-histidine + L-alanine. The enzyme catalyses glycyl-L-histidine + H2O = L-histidine + glycine. It carries out the reaction L-homocarnosine + H2O = 4-aminobutanoate + L-histidine. In terms of biological role, catalyzes the peptide bond hydrolysis in Xaa-His dipeptides, displaying the highest activity toward carnosine (beta-alanyl-L-histidine) and anserine (beta-alanyl-3-methyl-histidine). The sequence is that of Beta-Ala-His dipeptidase (Cndp1) from Rattus norvegicus (Rat).